A 458-amino-acid chain; its full sequence is MALWGGRFTQAADSRFKSFNDSLRFDYRLAEQDIVGSIAWSKALVSVNVLSVQEQQQLEQALNHLLQSVQQDPEQILASDAEDIHSWVEQKLIEQVGDLGKKLHTGRSRNDQVATDLKLWCRDQGVHLLLALKTLQQQLVAVAAEHQSTVLPGYTHLQRAQPVTFTHWCLAYLEMFERDESRLTDALARLNTSPLGSGALAGTAYAIDREVLAADLGFTRATRNSLDAVSDRDHVMELMSVASISMLHLSRLAEDMIFYTTGEAGFIELADTVTSGSSLMPQKKNPDALELIRGKTGRVYGALAGMMMTVKALPLAYNKDMQEDKEGLFDALDTWFDCLQMAGLCFDGIKVNAARTLEAAKQGYSNATELADYLVAKGIPFREAHHIVGVAVVAAIGKGVALEELCLAELQQFSPLIEQDVYPILTIESCLEKRCALGGVSPKQVAHALQQAQARVKS.

The protein belongs to the lyase 1 family. Argininosuccinate lyase subfamily.

It localises to the cytoplasm. It catalyses the reaction 2-(N(omega)-L-arginino)succinate = fumarate + L-arginine. Its pathway is amino-acid biosynthesis; L-arginine biosynthesis; L-arginine from L-ornithine and carbamoyl phosphate: step 3/3. The chain is Argininosuccinate lyase from Vibrio cholerae serotype O1 (strain ATCC 39541 / Classical Ogawa 395 / O395).